Consider the following 481-residue polypeptide: Glycogen synthase (481 aa).

Residue K16 coordinates ADP-alpha-D-glucose.

Belongs to the glycosyltransferase 1 family. Bacterial/plant glycogen synthase subfamily.

The enzyme catalyses [(1-&gt;4)-alpha-D-glucosyl](n) + ADP-alpha-D-glucose = [(1-&gt;4)-alpha-D-glucosyl](n+1) + ADP + H(+). The protein operates within glycan biosynthesis; glycogen biosynthesis. Synthesizes alpha-1,4-glucan chains using ADP-glucose. This Cellvibrio japonicus (strain Ueda107) (Pseudomonas fluorescens subsp. cellulosa) protein is Glycogen synthase.